The sequence spans 103 residues: Small ribosomal subunit protein uS10 (103 aa).

It belongs to the universal ribosomal protein uS10 family. Part of the 30S ribosomal subunit.

In terms of biological role, involved in the binding of tRNA to the ribosomes. The protein is Small ribosomal subunit protein uS10 of Stutzerimonas stutzeri (strain A1501) (Pseudomonas stutzeri).